Reading from the N-terminus, the 216-residue chain is Cytidylate kinase (216 aa).

Glycine 11 to threonine 19 contributes to the ATP binding site.

The protein belongs to the cytidylate kinase family. Type 1 subfamily.

The protein localises to the cytoplasm. It carries out the reaction CMP + ATP = CDP + ADP. The catalysed reaction is dCMP + ATP = dCDP + ADP. This chain is Cytidylate kinase, found in Mesorhizobium japonicum (strain LMG 29417 / CECT 9101 / MAFF 303099) (Mesorhizobium loti (strain MAFF 303099)).